The following is a 621-amino-acid chain: Amino-acid acetyltransferase, mitochondrial (621 aa).

The N-terminal 77 residues, 1–77, are a transit peptide targeting the mitochondrion; it reads MIPRAPPSTQ…RSYLASFGVQ (77 aa). Positions 213 to 233 are disordered; it reads PKPGSEEESEPGFSPPETHIY. The region spanning 424-600 is the N-acetyltransferase domain; the sequence is LPIRVVRSVS…GSAGLSFIED (177 aa).

It belongs to the acetyltransferase family.

It localises to the mitochondrion. It catalyses the reaction L-glutamate + acetyl-CoA = N-acetyl-L-glutamate + CoA + H(+). The protein operates within amino-acid biosynthesis; L-arginine biosynthesis; N(2)-acetyl-L-ornithine from L-glutamate: step 1/4. In terms of biological role, N-acetylglutamate synthase involved in arginine biosynthesis. The polypeptide is Amino-acid acetyltransferase, mitochondrial (ARG2) (Coprinopsis cinerea (strain Okayama-7 / 130 / ATCC MYA-4618 / FGSC 9003) (Inky cap fungus)).